Here is a 79-residue protein sequence, read N- to C-terminus: MENLNVDMLYIAVAIMVGLASIGAAIGIGILGGKFLEGAARQPDLVPLLRTQFFVVMGLVDAIPMIAVGLGLYMLFAIS.

Helical transmembrane passes span 11-31 and 53-73; these read IAVAIMVGLASIGAAIGIGIL and FFVVMGLVDAIPMIAVGLGLY.

It belongs to the ATPase C chain family. In terms of assembly, F-type ATPases have 2 components, F(1) - the catalytic core - and F(0) - the membrane proton channel. F(1) has five subunits: alpha(3), beta(3), gamma(1), delta(1), epsilon(1). F(0) has three main subunits: a(1), b(2) and c(10-14). The alpha and beta chains form an alternating ring which encloses part of the gamma chain. F(1) is attached to F(0) by a central stalk formed by the gamma and epsilon chains, while a peripheral stalk is formed by the delta and b chains.

The protein resides in the cell membrane. In terms of biological role, f(1)F(0) ATP synthase produces ATP from ADP in the presence of a proton or sodium gradient. F-type ATPases consist of two structural domains, F(1) containing the extramembraneous catalytic core and F(0) containing the membrane proton channel, linked together by a central stalk and a peripheral stalk. During catalysis, ATP synthesis in the catalytic domain of F(1) is coupled via a rotary mechanism of the central stalk subunits to proton translocation. Its function is as follows. Key component of the F(0) channel; it plays a direct role in translocation across the membrane. A homomeric c-ring of between 10-14 subunits forms the central stalk rotor element with the F(1) delta and epsilon subunits. This is ATP synthase subunit c from Buchnera aphidicola subsp. Acyrthosiphon pisum (strain 5A).